The following is an 81-amino-acid chain: Sulfur carrier protein TusA (81 aa).

The active-site Cysteine persulfide intermediate is cysteine 19.

This sequence belongs to the sulfur carrier protein TusA family. As to quaternary structure, interacts with IscS.

The protein localises to the cytoplasm. Its pathway is tRNA modification. Functionally, sulfur carrier protein involved in sulfur trafficking in the cell. Part of a sulfur-relay system required for 2-thiolation during synthesis of 2-thiouridine of the modified wobble base 5-methylaminomethyl-2-thiouridine (mnm(5)s(2)U) in tRNA. Interacts with IscS and stimulates its cysteine desulfurase activity. Accepts an activated sulfur from IscS, which is then transferred to TusD, and thus determines the direction of sulfur flow from IscS to 2-thiouridine formation. Also appears to be involved in sulfur transfer for the biosynthesis of molybdopterin. This Escherichia coli (strain SMS-3-5 / SECEC) protein is Sulfur carrier protein TusA.